An 87-amino-acid chain; its full sequence is Putative defensin-like protein 304 (87 aa).

The signal sequence occupies residues 1–19; sequence MKSNKVTFFLGLFLVSAFC. 3 disulfide bridges follow: C27–C46, C33–C51, and C40–C53.

This sequence belongs to the DEFL family.

It is found in the secreted. The protein is Putative defensin-like protein 304 of Arabidopsis thaliana (Mouse-ear cress).